We begin with the raw amino-acid sequence, 104 residues long: Large ribosomal subunit protein bL28 (104 aa).

It belongs to the bacterial ribosomal protein bL28 family.

This is Large ribosomal subunit protein bL28 from Wolbachia sp. subsp. Brugia malayi (strain TRS).